The following is a 177-amino-acid chain: Protein LIGHT-DEPENDENT SHORT HYPOCOTYLS 10 (177 aa).

Positions 1 to 10 (MSSPRERGKS) are enriched in basic and acidic residues. Disordered regions lie at residues 1–31 (MSSP…SQKR) and 144–177 (RGIP…FSFS). The ALOG domain occupies 25 to 152 (RYESQKRRDW…ARGIPYKKKK (128 aa)). Positions 150 to 154 (KKKKK) match the Nuclear localization signal motif. Positions 168–177 (SSSSSSFSFS) are enriched in low complexity.

Belongs to the plant homeotic and developmental regulators ALOG protein family.

It localises to the nucleus. In terms of biological role, probable transcription regulator that acts as a developmental regulator by promoting cell growth in response to light. This is Protein LIGHT-DEPENDENT SHORT HYPOCOTYLS 10 (LSH10) from Arabidopsis thaliana (Mouse-ear cress).